The following is a 260-amino-acid chain: Hydroxypyruvate/pyruvate aldolase Bphyt_0320 (260 aa).

The active-site Proton acceptor is the H48. E157 and D183 together coordinate a divalent metal cation.

Belongs to the HpcH/HpaI aldolase family. It depends on Mn(2+) as a cofactor. The cofactor is Mg(2+). Co(2+) is required as a cofactor.

The catalysed reaction is D-glyceraldehyde + 3-hydroxypyruvate = 2-dehydro-D-gluconate. The enzyme catalyses D-glyceraldehyde + pyruvate = 2-dehydro-3-deoxy-L-galactonate. It carries out the reaction 2-dehydro-3-deoxy-D-gluconate = D-glyceraldehyde + pyruvate. Aldolase which can catalyze in vitro the aldolisation reaction between hydroxypyruvate (HPA) or pyruvate (PA) and D-glyceraldehyde (D-GA). The condensation of hydroxypyruvate and D-glyceraldehyde produces 2-dehydro-D-gluconate. The condensation of pyruvate and D-glyceraldehyde produces 2-dehydro-3-deoxy-L-galactonate as the major product and 2-dehydro-3-deoxy-D-gluconate. Also catalyzes the retro-aldol type decarboxylation of oxaloacetate, a general property of known pyruvate aldolases. This Paraburkholderia phytofirmans (strain DSM 17436 / LMG 22146 / PsJN) (Burkholderia phytofirmans) protein is Hydroxypyruvate/pyruvate aldolase Bphyt_0320.